The chain runs to 166 residues: uncharacterized protein (166 aa).

The 63-residue stretch at 3–65 (LTEKETEILE…IDWRKVDGHE (63 aa)) folds into the HTH asnC-type domain. The segment at residues 22 to 41 (LETIAKMAGIPVNEVKTIID) is a DNA-binding region (H-T-H motif).

This is an uncharacterized protein from Bacillus subtilis (strain 168).